Here is a 300-residue protein sequence, read N- to C-terminus: Ribosomal RNA small subunit methyltransferase H (300 aa).

S-adenosyl-L-methionine-binding positions include 46 to 48, D65, F92, D107, and Q114; that span reads GGH.

This sequence belongs to the methyltransferase superfamily. RsmH family.

The protein resides in the cytoplasm. It carries out the reaction cytidine(1402) in 16S rRNA + S-adenosyl-L-methionine = N(4)-methylcytidine(1402) in 16S rRNA + S-adenosyl-L-homocysteine + H(+). In terms of biological role, specifically methylates the N4 position of cytidine in position 1402 (C1402) of 16S rRNA. In Prochlorococcus marinus (strain MIT 9301), this protein is Ribosomal RNA small subunit methyltransferase H.